We begin with the raw amino-acid sequence, 70 residues long: Large ribosomal subunit protein bL31 (70 aa).

4 residues coordinate Zn(2+): Cys17, Cys19, Cys37, and Cys40.

It belongs to the bacterial ribosomal protein bL31 family. Type A subfamily. As to quaternary structure, part of the 50S ribosomal subunit. The cofactor is Zn(2+).

Functionally, binds the 23S rRNA. The polypeptide is Large ribosomal subunit protein bL31 (Clostridium acetobutylicum (strain ATCC 824 / DSM 792 / JCM 1419 / IAM 19013 / LMG 5710 / NBRC 13948 / NRRL B-527 / VKM B-1787 / 2291 / W)).